The sequence spans 142 residues: ATP synthase epsilon chain (142 aa).

It belongs to the ATPase epsilon chain family. F-type ATPases have 2 components, CF(1) - the catalytic core - and CF(0) - the membrane proton channel. CF(1) has five subunits: alpha(3), beta(3), gamma(1), delta(1), epsilon(1). CF(0) has three main subunits: a, b and c.

It localises to the cell inner membrane. Functionally, produces ATP from ADP in the presence of a proton gradient across the membrane. This Shewanella pealeana (strain ATCC 700345 / ANG-SQ1) protein is ATP synthase epsilon chain.